Reading from the N-terminus, the 347-residue chain is Fe(2+) transport protein 1 (347 aa).

The first 22 residues, methionine 1 to alanine 22, serve as a signal peptide directing secretion. Over isoleucine 23–lysine 52 the chain is Extracellular. A helical membrane pass occupies residues valine 53 to serine 73. The Cytoplasmic segment spans residues arginine 74–asparagine 84. A helical membrane pass occupies residues isoleucine 85–valine 105. Residues leucine 106–lysine 125 lie on the Extracellular side of the membrane. Residues phenylalanine 126–methionine 146 form a helical membrane-spanning segment. The Cytoplasmic portion of the chain corresponds to alanine 147–arginine 192. Glycyl lysine isopeptide (Lys-Gly) (interchain with G-Cter in ubiquitin) cross-links involve residues lysine 154 and lysine 179. Residues valine 193–leucine 213 form a helical membrane-spanning segment. The Extracellular segment spans residues glycine 214–glycine 224. A helical transmembrane segment spans residues leucine 225–leucine 245. Topologically, residues glutamine 246–lysine 254 are cytoplasmic. A helical membrane pass occupies residues phenylalanine 255–leucine 275. Over serine 276–alanine 286 the chain is Extracellular. Residues leucine 287 to valine 307 traverse the membrane as a helical segment. At aspartate 308–glutamine 326 the chain is on the cytoplasmic side. Residues phenylalanine 327–alanine 347 form a helical membrane-spanning segment.

Belongs to the ZIP transporter (TC 2.A.5) family. Interacts with FREE1. In terms of processing, monoubiquitinated on several Lys residues. Monoubiquitination controls trafficking from the plasma membrane and targeting to the vacuole. Expressed in the external cell layers of the root including the lateral branching zone. Also detected in flowers before pollination.

Its subcellular location is the cell membrane. The protein resides in the early endosome. It localises to the golgi apparatus. The protein localises to the trans-Golgi network. It is found in the vacuole. In terms of biological role, high-affinity iron transporter that plays a key role in the uptake of iron from the rhizosphere across the plasma membrane in the root epidermal layer. Acts as the principal regulator of iron homeostasis in planta. Also mediates the heavy metals uptake under iron-deficiency by its ability to transport cobalt, cadmium, manganese and/or zinc ions. In Arabidopsis thaliana (Mouse-ear cress), this protein is Fe(2+) transport protein 1 (IRT1).